Here is a 179-residue protein sequence, read N- to C-terminus: Large ribosomal subunit protein uL5c (179 aa).

It belongs to the universal ribosomal protein uL5 family. Part of the 50S ribosomal subunit; contacts the 5S rRNA.

The protein localises to the plastid. The protein resides in the chloroplast. Binds 5S rRNA, forms part of the central protuberance of the 50S subunit. This chain is Large ribosomal subunit protein uL5c (rpl5), found in Euglena gracilis.